The following is an 86-amino-acid chain: Small ribosomal subunit protein bS20 (86 aa).

It belongs to the bacterial ribosomal protein bS20 family.

Functionally, binds directly to 16S ribosomal RNA. This Paenarthrobacter aurescens (strain TC1) protein is Small ribosomal subunit protein bS20.